The chain runs to 188 residues: Elongation factor P (188 aa).

Belongs to the elongation factor P family.

Its subcellular location is the cytoplasm. It functions in the pathway protein biosynthesis; polypeptide chain elongation. Its function is as follows. Involved in peptide bond synthesis. Stimulates efficient translation and peptide-bond synthesis on native or reconstituted 70S ribosomes in vitro. Probably functions indirectly by altering the affinity of the ribosome for aminoacyl-tRNA, thus increasing their reactivity as acceptors for peptidyl transferase. This Methylobacterium sp. (strain 4-46) protein is Elongation factor P.